Reading from the N-terminus, the 213-residue chain is ATP synthase subunit b 2 (213 aa).

The interval 1-45 is disordered; sequence MFVTEAYAQSAPTVGETHTETPAVGQPQPEATHTETGVAHGAEHG. Residues 57-76 form a helical membrane-spanning segment; that stretch reads TYASQVLWLAITFGLFYLLM.

It belongs to the ATPase B chain family. F-type ATPases have 2 components, F(1) - the catalytic core - and F(0) - the membrane proton channel. F(1) has five subunits: alpha(3), beta(3), gamma(1), delta(1), epsilon(1). F(0) has three main subunits: a(1), b(2) and c(10-14). The alpha and beta chains form an alternating ring which encloses part of the gamma chain. F(1) is attached to F(0) by a central stalk formed by the gamma and epsilon chains, while a peripheral stalk is formed by the delta and b chains.

It is found in the cell inner membrane. F(1)F(0) ATP synthase produces ATP from ADP in the presence of a proton or sodium gradient. F-type ATPases consist of two structural domains, F(1) containing the extramembraneous catalytic core and F(0) containing the membrane proton channel, linked together by a central stalk and a peripheral stalk. During catalysis, ATP synthesis in the catalytic domain of F(1) is coupled via a rotary mechanism of the central stalk subunits to proton translocation. Its function is as follows. Component of the F(0) channel, it forms part of the peripheral stalk, linking F(1) to F(0). The b'-subunit is a diverged and duplicated form of b found in plants and photosynthetic bacteria. The chain is ATP synthase subunit b 2 (atpF2) from Agrobacterium fabrum (strain C58 / ATCC 33970) (Agrobacterium tumefaciens (strain C58)).